A 950-amino-acid chain; its full sequence is Protocadherin alpha-6 (950 aa).

The N-terminal stretch at Met1–Gly29 is a signal peptide. Residues Gln30–Asn697 lie on the Extracellular side of the membrane. Cadherin domains follow at residues Ser34–Phe133, Ala157–Phe242, Glu243–Ile350, Ala351–Phe455, Ala456–Leu565, and Val581–Ala678. N-linked (GlcNAc...) asparagine glycosylation is found at Asn257, Asn265, Asn386, and Asn548. A helical membrane pass occupies residues Val698–Tyr718. The Cytoplasmic segment spans residues Thr719–Gln950. PXXP repeat units lie at residues Pro799 to Pro802, Pro832 to Pro835, Pro873 to Pro876, and Pro891 to Pro894. Residues Pro799–Pro894 form a 4 X 4 AA repeats of P-X-X-P region. Residues Ala830–Ile889 form a disordered region. Residues Gln901 to Gln950 form a disordered region. Basic and acidic residues predominate over residues Asp909–Lys923.

Its subcellular location is the cell membrane. In terms of biological role, potential calcium-dependent cell-adhesion protein. May be involved in the establishment and maintenance of specific neuronal connections in the brain. The protein is Protocadherin alpha-6 (PCDHA6) of Pan troglodytes (Chimpanzee).